Reading from the N-terminus, the 300-residue chain is tRNA dimethylallyltransferase (300 aa).

Position 9 to 16 (9 to 16) interacts with ATP; the sequence is GPTASGKS. 11–16 serves as a coordination point for substrate; sequence TASGKS. The tract at residues 34 to 37 is interaction with substrate tRNA; it reads DSKQ.

Belongs to the IPP transferase family. As to quaternary structure, monomer. Requires Mg(2+) as cofactor.

The enzyme catalyses adenosine(37) in tRNA + dimethylallyl diphosphate = N(6)-dimethylallyladenosine(37) in tRNA + diphosphate. Its function is as follows. Catalyzes the transfer of a dimethylallyl group onto the adenine at position 37 in tRNAs that read codons beginning with uridine, leading to the formation of N6-(dimethylallyl)adenosine (i(6)A). The sequence is that of tRNA dimethylallyltransferase from Ehrlichia canis (strain Jake).